The following is a 415-amino-acid chain: Dynein assembly factor with WD repeat domains 1 (415 aa).

8 WD repeats span residues A90 to T129, G132 to R174, G175 to T214, G217 to T256, G259 to T298, G301 to K340, G343 to K384, and H386 to R415.

It belongs to the WD repeat WDR69 family.

It localises to the cytoplasm. Its subcellular location is the cytoskeleton. The protein localises to the flagellum basal body. The protein resides in the flagellum axoneme. In terms of biological role, required for axonemal dynein assembly and ciliary motility in ciliated organs, including Kupffer's vesicle, during embryogenesis. Facilitates the onset of robust cilia motility during development. This Xenopus laevis (African clawed frog) protein is Dynein assembly factor with WD repeat domains 1 (daw1).